The following is a 366-amino-acid chain: Probable neutral protease 2 homolog B (366 aa).

Residues Met1–Gly19 form the signal peptide. A propeptide spanning residues Phe20–Arg189 is cleaved from the precursor. 3 disulfide bridges follow: Cys197–Cys267, Cys274–Cys292, and Cys306–Cys366. Zn(2+) is bound at residue His317. Glu318 is a catalytic residue. The Zn(2+) site is built by His321 and Asp332.

Belongs to the peptidase M35 family. Requires Zn(2+) as cofactor.

The protein resides in the secreted. It carries out the reaction Preferential cleavage of bonds with hydrophobic residues in P1'. Also 3-Asn-|-Gln-4 and 8-Gly-|-Ser-9 bonds in insulin B chain.. Probable secreted metalloprotease that shows high activities on basic nuclear substrates such as histone and protamine. May be involved in virulence. The chain is Probable neutral protease 2 homolog B (NpII-B) from Trichophyton rubrum (Athlete's foot fungus).